A 468-amino-acid polypeptide reads, in one-letter code: 3-isopropylmalate dehydratase large subunit (468 aa).

3 residues coordinate [4Fe-4S] cluster: cysteine 347, cysteine 407, and cysteine 410.

The protein belongs to the aconitase/IPM isomerase family. LeuC type 1 subfamily. In terms of assembly, heterodimer of LeuC and LeuD. Requires [4Fe-4S] cluster as cofactor.

It catalyses the reaction (2R,3S)-3-isopropylmalate = (2S)-2-isopropylmalate. It participates in amino-acid biosynthesis; L-leucine biosynthesis; L-leucine from 3-methyl-2-oxobutanoate: step 2/4. Catalyzes the isomerization between 2-isopropylmalate and 3-isopropylmalate, via the formation of 2-isopropylmaleate. The sequence is that of 3-isopropylmalate dehydratase large subunit from Rippkaea orientalis (strain PCC 8801 / RF-1) (Cyanothece sp. (strain PCC 8801)).